The sequence spans 121 residues: Small ribosomal subunit protein uS13 (121 aa).

The tract at residues 92 to 121 (RKGLPVRGQSSKTNARTVKGPRKTVANKKK) is disordered. Residues 110 to 121 (KGPRKTVANKKK) are compositionally biased toward basic residues.

Belongs to the universal ribosomal protein uS13 family. In terms of assembly, part of the 30S ribosomal subunit. Forms a loose heterodimer with protein S19. Forms two bridges to the 50S subunit in the 70S ribosome.

Located at the top of the head of the 30S subunit, it contacts several helices of the 16S rRNA. In the 70S ribosome it contacts the 23S rRNA (bridge B1a) and protein L5 of the 50S subunit (bridge B1b), connecting the 2 subunits; these bridges are implicated in subunit movement. Contacts the tRNAs in the A and P-sites. In Mycoplasma mycoides subsp. mycoides SC (strain CCUG 32753 / NCTC 10114 / PG1), this protein is Small ribosomal subunit protein uS13.